The following is a 174-amino-acid chain: MMSIKLTLCALIFFLLNSLLHHVLGHDNQLNTTSSWLKSHIKAATTTNWGRPKPPMCKPWICKRSGPSEARMRCCRNQCVDVLSDPNHCRFCFKSCRFALSCCDGDCVDTNTDPSNCGQCGNECESGAPCEFGMCGYAAPSSQPGKRHRRHKFHRPRPPPSPDSKLNYDDHDDE.

Positions 1-25 (MMSIKLTLCALIFFLLNSLLHHVLG) are cleaved as a signal peptide. The interval 140-174 (PSSQPGKRHRRHKFHRPRPPPSPDSKLNYDDHDDE) is disordered. Residues 145 to 157 (GKRHRRHKFHRPR) are compositionally biased toward basic residues.

This sequence belongs to the STIG1 family.

The protein localises to the secreted. Endosperm-specific cysteine-rich protein that acts downstream of BHLH95/ZOU to modify the interface between embryo and endosperm and mediate the separation of these two tissues during seed development. Necessary for the biogenesis of the embryo sheath, an extracuticular endosperm-derived structure at the surface of the embryo. Required for the separation of embryo and endosperm, and for normal progression of the embryo through the endosperm tissue. Required for the formation of a normal embryonic cuticle. The protein is Stigma-specific STIG1-like protein 4 of Arabidopsis thaliana (Mouse-ear cress).